Here is an 865-residue protein sequence, read N- to C-terminus: Protein fluG (865 aa).

Residues 442–533 (PGVKYVWTQF…VMTWWKSEQG (92 aa)) enclose the GS beta-grasp domain. The 326-residue stretch at 540-865 (PRTNLLNINN…ARRKWLVERY (326 aa)) folds into the GS catalytic domain.

This sequence belongs to the glutamine synthetase family.

It localises to the cytoplasm. Its function is as follows. May function as a GSI-related enzyme in synthesizing a small diffusible factor that acts as an extracellular signal directing asexual sporulation and perhaps other aspects of colony growth. May be involved in brlA activation (an early transcriptional regulator for conidiation specific gene). In Emericella nidulans (strain FGSC A4 / ATCC 38163 / CBS 112.46 / NRRL 194 / M139) (Aspergillus nidulans), this protein is Protein fluG (fluG).